The sequence spans 210 residues: uncharacterized protein (210 aa).

The N-terminal stretch at 1 to 20 is a signal peptide; that stretch reads MRVITLSGITLFLLASLASA. At 21-175 the chain is on the lumenal side; the sequence is IELTFKLENQ…YSTVKSTQAR (155 aa). One can recognise a GOLD domain in the interval 32-115; sequence KQCYYLDSFH…DKIVTMEITM (84 aa). An N-linked (GlcNAc...) asparagine glycan is attached at asparagine 165. Residues 176 to 196 form a helical membrane-spanning segment; the sequence is IFWFSLAESIMVVALSALQVF. At 197–210 the chain is on the cytoplasmic side; sequence IVKTFFKRSGRRGV.

The protein belongs to the EMP24/GP25L family.

It is found in the endoplasmic reticulum membrane. This is an uncharacterized protein from Schizosaccharomyces pombe (strain 972 / ATCC 24843) (Fission yeast).